Here is a 395-residue protein sequence, read N- to C-terminus: Putative 8-amino-7-oxononanoate synthase (395 aa).

Residue arginine 23 participates in substrate binding. 110-111 (GY) contributes to the pyridoxal 5'-phosphate binding site. Histidine 135 is a binding site for substrate. Residues serine 182, 207–210 (DEAH), and 239–242 (TFSK) each bind pyridoxal 5'-phosphate. Residue lysine 242 is modified to N6-(pyridoxal phosphate)lysine. Threonine 356 provides a ligand contact to substrate.

It belongs to the class-II pyridoxal-phosphate-dependent aminotransferase family. BioF subfamily. Homodimer. Pyridoxal 5'-phosphate serves as cofactor.

It catalyses the reaction 6-carboxyhexanoyl-[ACP] + L-alanine + H(+) = (8S)-8-amino-7-oxononanoate + holo-[ACP] + CO2. The protein operates within cofactor biosynthesis; biotin biosynthesis. Its function is as follows. Catalyzes the decarboxylative condensation of pimeloyl-[acyl-carrier protein] and L-alanine to produce 8-amino-7-oxononanoate (AON), [acyl-carrier protein], and carbon dioxide. The polypeptide is Putative 8-amino-7-oxononanoate synthase (bioF) (Bacillus cereus (strain B4264)).